We begin with the raw amino-acid sequence, 177 residues long: ECF RNA polymerase sigma factor SigL (177 aa).

The segment at 18-85 is sigma-70 factor domain-2; it reads LYDEHAAVLW…MIIDERRSAR (68 aa). Positions 42–45 match the Interaction with polymerase core subunit RpoC motif; that stretch reads DVVQ. The tract at residues 119 to 167 is sigma-70 factor domain-4; sequence ALAQLSAEHRAVIQRSYYRGWSTAQIATDLGIAEGTVKSRLHYAVRALR. Residues 141–160 constitute a DNA-binding region (H-T-H motif); the sequence is TAQIATDLGIAEGTVKSRLH.

It belongs to the sigma-70 factor family. ECF subfamily. Interacts transiently with the RNA polymerase catalytic core formed by RpoA, RpoB, RpoC and RpoZ (2 alpha, 1 beta, 1 beta' and 1 omega subunit) to form the RNA polymerase holoenzyme that can initiate transcription. Interacts (via sigma-70 factor domain 4) with anti-sigma-L factor RslA.

Its function is as follows. Sigma factors are initiation factors that promote the attachment of RNA polymerase to specific initiation sites and are then released. Extracytoplasmic function (ECF) sigma factors are held in an inactive form by an anti-sigma factor until released by regulated intramembrane proteolysis. This is ECF RNA polymerase sigma factor SigL (sigL) from Mycobacterium tuberculosis (strain ATCC 35801 / TMC 107 / Erdman).